The chain runs to 291 residues: uncharacterized protein (291 aa).

Residues 2–62 (KEKEKLIIET…SMLNYYYDKT (61 aa)) enclose the HTH tetR-type domain. Positions 25-44 (SVQEIAKECKISKGAFYIYF) form a DNA-binding region, H-T-H motif.

This is an uncharacterized protein from Bacillus subtilis (strain 168).